A 171-amino-acid polypeptide reads, in one-letter code: Adenine phosphoribosyltransferase (171 aa).

It belongs to the purine/pyrimidine phosphoribosyltransferase family. As to quaternary structure, homodimer.

It localises to the cytoplasm. The catalysed reaction is AMP + diphosphate = 5-phospho-alpha-D-ribose 1-diphosphate + adenine. It participates in purine metabolism; AMP biosynthesis via salvage pathway; AMP from adenine: step 1/1. Functionally, catalyzes a salvage reaction resulting in the formation of AMP, that is energically less costly than de novo synthesis. This is Adenine phosphoribosyltransferase from Acetivibrio thermocellus (strain ATCC 27405 / DSM 1237 / JCM 9322 / NBRC 103400 / NCIMB 10682 / NRRL B-4536 / VPI 7372) (Clostridium thermocellum).